We begin with the raw amino-acid sequence, 443 residues long: Cysteine proteinase B (443 aa).

Residues 1-27 form the signal peptide; the sequence is MATSRAALCAVAVVCVVLAAACAPARA. Positions 28-125 are cleaved as a propeptide — activation peptide; sequence IHVGTPAAAL…YRKARADLSA (98 aa). Disulfide bonds link Cys-147/Cys-188 and Cys-181/Cys-226. Cys-150 is a catalytic residue. An N-linked (GlcNAc...) asparagine glycan is attached at Asn-228. Cysteines 281 and 329 form a disulfide. Residues His-288 and Asn-308 contribute to the active site.

This sequence belongs to the peptidase C1 family.

This is Cysteine proteinase B (LMCPB) from Leishmania mexicana.